The chain runs to 130 residues: Small ribosomal subunit protein uS8 (130 aa).

Lys88 is modified (N6-succinyllysine).

Belongs to the universal ribosomal protein uS8 family. In terms of assembly, component of the 40S ribosomal subunit. Part of the small subunit (SSU) processome, composed of more than 70 proteins and the RNA chaperone small nucleolar RNA (snoRNA) U3.

It localises to the cytoplasm. Its subcellular location is the nucleus. The protein resides in the nucleolus. Component of the small ribosomal subunit. Part of the small subunit (SSU) processome, first precursor of the small eukaryotic ribosomal subunit. During the assembly of the SSU processome in the nucleolus, many ribosome biogenesis factors, an RNA chaperone and ribosomal proteins associate with the nascent pre-rRNA and work in concert to generate RNA folding, modifications, rearrangements and cleavage as well as targeted degradation of pre-ribosomal RNA by the RNA exosome. Required for proper erythropoiesis. The polypeptide is Small ribosomal subunit protein uS8 (RPS15A) (Pongo abelii (Sumatran orangutan)).